Here is a 278-residue protein sequence, read N- to C-terminus: Probable cytochrome c oxidase subunit 3 (278 aa).

Transmembrane regions (helical) follow at residues 21–41 (PWPILTSFALLLLVIGGISSM), 46–66 (FNMYILSAGVISVIYCLYSWW), 89–109 (IGMVLFILTETVFFSVFFASF), 174–194 (CVTALAFTIVLGIFFTLMQVY), 212–232 (FYLATGFHGAHVVIGTIFLIV), and 256–276 (AWYWHFVDVVWLFLFTFVYIL).

It belongs to the cytochrome c oxidase subunit 3 family.

The protein resides in the cell membrane. The enzyme catalyses 4 Fe(II)-[cytochrome c] + O2 + 8 H(+)(in) = 4 Fe(III)-[cytochrome c] + 2 H2O + 4 H(+)(out). The sequence is that of Probable cytochrome c oxidase subunit 3 (ctaE) from Rickettsia prowazekii (strain Madrid E).